A 737-amino-acid polypeptide reads, in one-letter code: Delta and Notch-like epidermal growth factor-related receptor (737 aa).

The N-terminal stretch at M1–G25 is a signal peptide. Over A26–Y640 the chain is Extracellular. 2 consecutive EGF-like domains span residues A44 to Q92 and V94 to E133. Residues A44–E133 form an interaction with NOTCH1 region. 6 disulfides stabilise this stretch: C48/C59, C53/C80, C82/C91, C98/C108, C103/C121, and C123/C132. N-linked (GlcNAc...) asparagine glycosylation is present at N204. EGF-like domains lie at P309–E348, E349–Q390, K392–E428, K430–A466, and L468–E503. Intrachain disulfides connect C319-C336, C338-C347, C353-C364, C358-C378, C380-C389, C396-C407, C401-C416, C418-C427, C434-C445, C439-C454, C456-C465, C472-C482, C477-C491, C493-C502, C509-C520, C514-C529, C531-C540, C547-C558, C552-C567, C569-C578, C585-C596, C590-C605, and C607-C616. The EGF-like 8; calcium-binding domain occupies E505–E541. In terms of domain architecture, EGF-like 9 spans Y543 to D579. N564 is a glycosylation site (N-linked (GlcNAc...) asparagine). Residues D581 to E617 enclose the EGF-like 10; calcium-binding domain. The helical transmembrane segment at I641–I661 threads the bilayer. Over C662 to L737 the chain is Cytoplasmic. Positions Y677 to F680 are interaction with AP1G1 and somatodendritic targeting. S685 carries the phosphoserine modification. Position 711 is a phosphotyrosine (Y711). At T714 the chain carries Phosphothreonine. Position 721 is a phosphotyrosine (Y721). Position 722 is a phosphoserine (S722).

As to quaternary structure, interacts with AP1G1. Interacts with NOTCH1. In terms of processing, N-glycosylated. Specifically expressed in brain neurons (at protein level).

It localises to the cell membrane. Mediates neuron-glia interaction during astrocytogenesis. May promote differentiation of Bergmann glia during cerebellar development by activating DELTEX-dependent NOTCH1 signaling. The chain is Delta and Notch-like epidermal growth factor-related receptor (Dner) from Mus musculus (Mouse).